Consider the following 2072-residue polypeptide: Protein still life, isoform SIF type 1 (2072 aa).

Glycine 2 carries the N-myristoyl glycine lipid modification. Residues 29–147 form the WH1 domain; sequence RRDGHLLSSF…ECCSPSFKFS (119 aa). Disordered stretches follow at residues 153 to 188, 245 to 284, 327 to 355, 459 to 486, 502 to 576, 618 to 655, and 699 to 747; these read SYSL…EPQC, DNVA…NTNT, EGTQ…RNKD, NNTM…RGYP, EGSP…SPTS, AKSS…ELIR, and SGSS…YKSA. Positions 275 to 284 are enriched in polar residues; sequence VANSGVNTNT. Composition is skewed to low complexity over residues 338-351, 459-476, and 522-553; these read SVGT…GTGT, NNTM…SGSR, and SSSN…PPQR. Over residues 564–576 the composition is skewed to polar residues; that stretch reads APNVTPTPGSPTS. Positions 634-655 are enriched in basic and acidic residues; the sequence is IRDKERDRDRDGYYSDRNELIR. Positions 732-743 are enriched in polar residues; that stretch reads SLRQDSSLNDSG. Positions 840-958 constitute a PH domain; sequence TGAVRKAGFL…SIHSACAAAF (119 aa). Positions 1088 to 1119 are disordered; the sequence is GRGATKRRPPMLSRSNSGSSRRSMQMNSRDEP. Low complexity predominate over residues 1100 to 1114; sequence SRSNSGSSRRSMQMN. Positions 1121 to 1188 constitute an RBD domain; that stretch reads KTFKVAMPDN…PHRNDLIENY (68 aa). Residues 1204-1293 form the PDZ domain; sequence QVELQRTTLE…LSMMMRSSRT (90 aa). The segment at 1403–1424 is disordered; that stretch reads AEQETRKSSPTGSVTSSVSTTA. Over residues 1410–1424 the composition is skewed to low complexity; that stretch reads SSPTGSVTSSVSTTA. A DH domain is found at 1436–1630; it reads KLRKVVMELV…EKVAEHINEM (195 aa). 3 disordered regions span residues 1803 to 1832, 1844 to 2039, and 2051 to 2072; these read MKNF…NSQT, HGSH…YQPV, and PRDM…DVKN. 2 stretches are compositionally biased toward low complexity: residues 1811–1821 and 1926–1943; these read GSVSGHSSQGM and QQQQ…QQGH. A compositionally biased stretch (basic and acidic residues) spans 1970 to 1984; it reads HSSDIERIDPGTKSE. Residues 2007–2022 are compositionally biased toward low complexity; that stretch reads LTLSTTSTLSVGSTGS. Polar residues predominate over residues 2023 to 2032; that stretch reads QARLIQSSHP.

Expressed in both larval and adult brains, mainly in a subset of neurons but not in glia. In the adult eye is expressed in the two primary pigment cells in the subapical region of the eye. Also present in photoreceptors.

The protein resides in the synapse. Its function is as follows. Regulates synaptic differentiation through the organization of actin cytoskeleton possibly by activating Rho-like GTPases. Is likely a factor in the cascade of Rac1 or Cdc42 in the neurons. May play a role in maintaining proper septate junction functions. Required for eye development and most likely affects corneal lens-formation. The sequence is that of Protein still life, isoform SIF type 1 (sif) from Drosophila melanogaster (Fruit fly).